Consider the following 158-residue polypeptide: Succinate dehydrogenase assembly factor 2, mitochondrial (158 aa).

The transit peptide at Met1 to Ala17 directs the protein to the mitochondrion.

This sequence belongs to the SDHAF2 family. Interacts with sdha within the SDH catalytic dimer.

Its subcellular location is the mitochondrion matrix. Functionally, plays an essential role in the assembly of succinate dehydrogenase (SDH), an enzyme complex (also referred to as respiratory complex II) that is a component of both the tricarboxylic acid (TCA) cycle and the mitochondrial electron transport chain, and which couples the oxidation of succinate to fumarate with the reduction of ubiquinone (coenzyme Q) to ubiquinol. Required for flavinylation (covalent attachment of FAD) of the flavoprotein subunit sdha of the SDH catalytic dimer. The protein is Succinate dehydrogenase assembly factor 2, mitochondrial of Danio rerio (Zebrafish).